The sequence spans 450 residues: MEDVWLQAQSNLAKVLTHQTFTTWIEPIRFAGAHKNTLLLEAPNQFIRDRVRESYLPMILESVRSLTDSHFQVELQVAARQQEKTAKSPRKSHTEDELGPVESEKCAPAEFSTNLNAKYTFDTFVCGGSNQFAHAAALSVANNPAGKYNPLFIYGGVGLGKTHLLTAIGNQVLTKNRKARVCFYTSEKFMNELINCLRYQKMEQFRNKFRKMDLLLIDDIQFIAGKERTQEEFFHTFNALYESHKQIVVTSDKFPKDIPGLEERLRSRFEWGLIADIQPPDTETKVAILSKKADSDGIRLPDDVALFLASSASTNVRELEGMLIRLGAVASLTGKNITLDMAREVLKDIIVDKTKEVTVEMIQKYVADHFNIKVAELKSDKRLKALVVPRQIAIYLCRDLTKASYPDIGEKFGGKDHSTIIHSVKKVDKLLSQDFELKSTIETLRKGLLN.

A domain I, interacts with DnaA modulators region spans residues 1-71; that stretch reads MEDVWLQAQS…SVRSLTDSHF (71 aa). Positions 71–113 are domain II; sequence FQVELQVAARQQEKTAKSPRKSHTEDELGPVESEKCAPAEFST. A disordered region spans residues 82 to 103; sequence QEKTAKSPRKSHTEDELGPVES. The interval 114–330 is domain III, AAA+ region; sequence NLNAKYTFDT…GMLIRLGAVA (217 aa). Residues G158, G160, K161, and T162 each contribute to the ATP site. Positions 331–450 are domain IV, binds dsDNA; sequence SLTGKNITLD…IETLRKGLLN (120 aa).

Belongs to the DnaA family. In terms of assembly, oligomerizes as a right-handed, spiral filament on DNA at oriC.

The protein localises to the cytoplasm. Its function is as follows. Plays an essential role in the initiation and regulation of chromosomal replication. ATP-DnaA binds to the origin of replication (oriC) to initiate formation of the DNA replication initiation complex once per cell cycle. Binds the DnaA box (a 9 base pair repeat at the origin) and separates the double-stranded (ds)DNA. Forms a right-handed helical filament on oriC DNA; dsDNA binds to the exterior of the filament while single-stranded (ss)DNA is stabiized in the filament's interior. The ATP-DnaA-oriC complex binds and stabilizes one strand of the AT-rich DNA unwinding element (DUE), permitting loading of DNA polymerase. After initiation quickly degrades to an ADP-DnaA complex that is not apt for DNA replication. Binds acidic phospholipids. This Geobacter metallireducens (strain ATCC 53774 / DSM 7210 / GS-15) protein is Chromosomal replication initiator protein DnaA.